The sequence spans 26 residues: GLWKNMLSGIGKLAGQAALGAVKTLV.

Val26 carries the valine amide modification.

In terms of tissue distribution, expressed by the skin glands.

The protein resides in the secreted. Has antimicrobial activity. In Phasmahyla jandaia (Jandaia leaf frog), this protein is Dermaseptin-J1.